A 155-amino-acid polypeptide reads, in one-letter code: Ribosomal RNA large subunit methyltransferase H (155 aa).

S-adenosyl-L-methionine contacts are provided by residues Leu72, Gly103, and 122–127; that span reads LSALTL.

This sequence belongs to the RNA methyltransferase RlmH family. Homodimer.

The protein localises to the cytoplasm. The enzyme catalyses pseudouridine(1915) in 23S rRNA + S-adenosyl-L-methionine = N(3)-methylpseudouridine(1915) in 23S rRNA + S-adenosyl-L-homocysteine + H(+). In terms of biological role, specifically methylates the pseudouridine at position 1915 (m3Psi1915) in 23S rRNA. This Cronobacter sakazakii (strain ATCC BAA-894) (Enterobacter sakazakii) protein is Ribosomal RNA large subunit methyltransferase H.